Consider the following 74-residue polypeptide: Translation initiation factor IF-1 2 (74 aa).

The region spanning 1-73 is the S1-like domain; that stretch reads MTKNKNVIEV…TRGRIVFRYR (73 aa).

This sequence belongs to the IF-1 family. Component of the 30S ribosomal translation pre-initiation complex which assembles on the 30S ribosome in the order IF-2 and IF-3, IF-1 and N-formylmethionyl-tRNA(fMet); mRNA recruitment can occur at any time during PIC assembly.

Its subcellular location is the cytoplasm. Its function is as follows. One of the essential components for the initiation of protein synthesis. Stabilizes the binding of IF-2 and IF-3 on the 30S subunit to which N-formylmethionyl-tRNA(fMet) subsequently binds. Helps modulate mRNA selection, yielding the 30S pre-initiation complex (PIC). Upon addition of the 50S ribosomal subunit IF-1, IF-2 and IF-3 are released leaving the mature 70S translation initiation complex. This is Translation initiation factor IF-1 2 from Streptomyces avermitilis (strain ATCC 31267 / DSM 46492 / JCM 5070 / NBRC 14893 / NCIMB 12804 / NRRL 8165 / MA-4680).